Reading from the N-terminus, the 421-residue chain is Serine hydroxymethyltransferase (421 aa).

Residues Leu121 and 125–127 contribute to the (6S)-5,6,7,8-tetrahydrofolate site; that span reads GHL. Position 229 is an N6-(pyridoxal phosphate)lysine (Lys229).

It belongs to the SHMT family. In terms of assembly, homodimer. The cofactor is pyridoxal 5'-phosphate.

The protein resides in the cytoplasm. It catalyses the reaction (6R)-5,10-methylene-5,6,7,8-tetrahydrofolate + glycine + H2O = (6S)-5,6,7,8-tetrahydrofolate + L-serine. It participates in one-carbon metabolism; tetrahydrofolate interconversion. Its pathway is amino-acid biosynthesis; glycine biosynthesis; glycine from L-serine: step 1/1. Catalyzes the reversible interconversion of serine and glycine with tetrahydrofolate (THF) serving as the one-carbon carrier. This reaction serves as the major source of one-carbon groups required for the biosynthesis of purines, thymidylate, methionine, and other important biomolecules. Also exhibits THF-independent aldolase activity toward beta-hydroxyamino acids, producing glycine and aldehydes, via a retro-aldol mechanism. In Actinobacillus pleuropneumoniae serotype 7 (strain AP76), this protein is Serine hydroxymethyltransferase.